The primary structure comprises 103 residues: MQPNDITFFQRFQDDILAGRKTITIRDESESHFKTGDVLRVGRFEDDGYFCTIEVTATSTVTLDTLTEKHAEQENMTLTELKKVIADIYPDQTQFYVIEFKCL.

An ASCH domain is found at 6–101 (ITFFQRFQDD…QTQFYVIEFK (96 aa)). The active-site Proton acceptor is the lysine 21. Catalysis depends on threonine 24, which acts as the Nucleophile. Glutamate 74 (proton donor) is an active-site residue.

Belongs to the N(4)-acetylcytidine amidohydrolase family.

The enzyme catalyses N(4)-acetylcytidine + H2O = cytidine + acetate + H(+). It catalyses the reaction N(4)-acetyl-2'-deoxycytidine + H2O = 2'-deoxycytidine + acetate + H(+). It carries out the reaction N(4)-acetylcytosine + H2O = cytosine + acetate + H(+). Catalyzes the hydrolysis of N(4)-acetylcytidine (ac4C). In Escherichia coli O81 (strain ED1a), this protein is N(4)-acetylcytidine amidohydrolase (yqfB).